The sequence spans 349 residues: tRNA pseudouridine synthase D (349 aa).

Substrate is bound at residue Phe27. Asp80 (nucleophile) is an active-site residue. Asn129 is a binding site for substrate. The region spanning 155 to 303 (GVPNYFGAQR…VEAARRAMLL (149 aa)) is the TRUD domain. Phe329 provides a ligand contact to substrate.

This sequence belongs to the pseudouridine synthase TruD family.

The catalysed reaction is uridine(13) in tRNA = pseudouridine(13) in tRNA. In terms of biological role, responsible for synthesis of pseudouridine from uracil-13 in transfer RNAs. This is tRNA pseudouridine synthase D from Escherichia coli (strain SMS-3-5 / SECEC).